Reading from the N-terminus, the 120-residue chain is Ribosome-binding factor A (120 aa).

The protein belongs to the RbfA family. As to quaternary structure, monomer. Binds 30S ribosomal subunits, but not 50S ribosomal subunits or 70S ribosomes.

The protein localises to the cytoplasm. Its function is as follows. One of several proteins that assist in the late maturation steps of the functional core of the 30S ribosomal subunit. Associates with free 30S ribosomal subunits (but not with 30S subunits that are part of 70S ribosomes or polysomes). Required for efficient processing of 16S rRNA. May interact with the 5'-terminal helix region of 16S rRNA. The polypeptide is Ribosome-binding factor A (Dictyoglomus thermophilum (strain ATCC 35947 / DSM 3960 / H-6-12)).